The following is a 239-amino-acid chain: Ribosomal RNA small subunit methyltransferase G (239 aa).

Residues G77, F82, 128-129 (AE), and R146 contribute to the S-adenosyl-L-methionine site. A disordered region spans residues 216–239 (KRRQTSKKYPRKPGTPNKSPLVES).

It belongs to the methyltransferase superfamily. RNA methyltransferase RsmG family.

It is found in the cytoplasm. Its function is as follows. Specifically methylates the N7 position of guanine in position 535 of 16S rRNA. This Staphylococcus epidermidis (strain ATCC 35984 / DSM 28319 / BCRC 17069 / CCUG 31568 / BM 3577 / RP62A) protein is Ribosomal RNA small subunit methyltransferase G.